A 1153-amino-acid chain; its full sequence is Error-prone DNA polymerase (1153 aa).

2 disordered regions span residues 1–39 (MFYS…QAQP) and 64–89 (VGEG…GASQ).

Belongs to the DNA polymerase type-C family. DnaE2 subfamily.

The protein localises to the cytoplasm. The catalysed reaction is DNA(n) + a 2'-deoxyribonucleoside 5'-triphosphate = DNA(n+1) + diphosphate. Its function is as follows. DNA polymerase involved in damage-induced mutagenesis and translesion synthesis (TLS). It is not the major replicative DNA polymerase. This Corynebacterium jeikeium (strain K411) protein is Error-prone DNA polymerase.